An 897-amino-acid polypeptide reads, in one-letter code: Coiled-coil domain-containing protein lobo (897 aa).

The disordered stretch occupies residues 27–49 (EIDEQRRSQGSESDFADEMEGEF). A compositionally biased stretch (acidic residues) spans 40–49 (DFADEMEGEF). Coiled-coil stretches lie at residues 269–306 (DLKS…DLEL) and 801–858 (SLLN…QRLT).

It belongs to the DRC7 family. As to expression, testis-specific (at protein level).

Its subcellular location is the cell projection. It is found in the cilium. It localises to the flagellum. The protein localises to the cytoplasm. The protein resides in the cytoskeleton. Its subcellular location is the cilium axoneme. Key component of the nexin-dynein regulatory complex (N-DRC), essential for N-DRC integrity. Involved in the regulation of flagellar motility. Involved in sperm motility. Required for the sperm to enter in the coiled storage seminal receptacle (SR) tubule. The protein is Coiled-coil domain-containing protein lobo (lobo) of Drosophila melanogaster (Fruit fly).